The sequence spans 149 residues: uncharacterized protein (149 aa).

Transmembrane regions (helical) follow at residues 39 to 61 (VPLGTLVFLFVVIITLIPLLIIG), 82 to 104 (VFGYSLIVSDIVGFAIVFFGAIL), and 119 to 141 (WMMMLGSLIALGTTANLVSSIYL).

The protein to M.pneumoniae MPN_090.

It localises to the cell membrane. This is an uncharacterized protein from Mycoplasma pneumoniae (strain ATCC 29342 / M129 / Subtype 1) (Mycoplasmoides pneumoniae).